A 299-amino-acid chain; its full sequence is GTPase Era (299 aa).

The region spanning 8–176 (RCGYVAIVGR…EKLVGERLPE (169 aa)) is the Era-type G domain. The interval 16-23 (GRPNVGKS) is G1. 16–23 (GRPNVGKS) lines the GTP pocket. Residues 42 to 46 (QTTRH) form a G2 region. Residues 63-66 (DTPG) form a G3 region. Residues 63 to 67 (DTPGL) and 125 to 128 (NKAD) each bind GTP. The segment at 125 to 128 (NKAD) is G4. A G5 region spans residues 155–157 (ISA). Residues 199–283 (IREKIMRQLG…MLNLWVKVKG (85 aa)) enclose the KH type-2 domain.

It belongs to the TRAFAC class TrmE-Era-EngA-EngB-Septin-like GTPase superfamily. Era GTPase family. In terms of assembly, monomer.

The protein localises to the cytoplasm. It localises to the cell inner membrane. Functionally, an essential GTPase that binds both GDP and GTP, with rapid nucleotide exchange. Plays a role in 16S rRNA processing and 30S ribosomal subunit biogenesis and possibly also in cell cycle regulation and energy metabolism. This chain is GTPase Era, found in Ectopseudomonas mendocina (strain ymp) (Pseudomonas mendocina).